The sequence spans 1129 residues: Phytochrome A (1129 aa).

Positions S217–L399 constitute a GAF domain. Residue C322 participates in phytochromobilin binding. PAS domains are found at residues V622–K692 and D755–G826. One can recognise a Histidine kinase domain in the interval Y906–A1123.

Belongs to the phytochrome family. In terms of assembly, homodimer. In terms of processing, contains one covalently linked phytochromobilin chromophore.

Functionally, regulatory photoreceptor which exists in two forms that are reversibly interconvertible by light: the Pr form that absorbs maximally in the red region of the spectrum and the Pfr form that absorbs maximally in the far-red region. Photoconversion of Pr to Pfr induces an array of morphogenic responses, whereas reconversion of Pfr to Pr cancels the induction of those responses. Pfr controls the expression of a number of nuclear genes including those encoding the small subunit of ribulose-bisphosphate carboxylase, chlorophyll A/B binding protein, protochlorophyllide reductase, rRNA, etc. It also controls the expression of its own gene(s) in a negative feedback fashion. The sequence is that of Phytochrome A (PHYA) from Petroselinum crispum (Parsley).